A 1338-amino-acid polypeptide reads, in one-letter code: MSAIELPPLRSRSEEAARAEHNAQTLAHENANIAGYDESPAVQQVETDAPETKGAPQASFKNYFRVFSYGTKLDYFLISLCCFTSIGAGTAMPLMNIVFGKLVGNFTDYFIPGSNVTRQEFEAEINKLALYIFYLFIGKFAMSYISMLAIRISGMRISAALRLAYLRALFAQPVSVIDTVSPGKVANRITTSSNIVQLAISQHFATLFQSLAFTVGLYVVALVKGWKLTLIASTGLPFILIVYGAMFPPFLRIHQITDKFQEEASAMAYEMFSSIRMIVAFGTESRLAKQHGVMLSKAASNEKRAAPLMGLTMSPAMVAMYGIFGITFWFGIKEYTKGRISSVGDITVVLFSVMMAVMNIGRVASPIISIAKAATAATELFVTIDASFHDTSGVMEPEVTGNAAITFINVAFSYPSRPGVPILKGLDLTITAGKVTAIVGPSGSGKSTIVGLIQRWYDLLGTTATAKKIDETEIPSSSTMASSPIEAVYDNTDKKSKKGKAGEEEEPEQDLGPNTCTGSLSVGRTNLRNVDVRWWRSQIGMVQQEPFLFNDTIYNNIVFGLCGTRYEGLSKDEKKIMVDEACREACAEEFISRLPQGLDTLVGESGIKLSGGQRQRIAIARSIIKRPPILILDEATSAIDVRTERIVQEALDRVSKNRTTIVIAHRLSTIKRADSIVVLRQGQLVEQGTHEELLKNGDGVYYGLVHAQELEMDAEDDDDHSSSLENIKMNDTKEDTASSGFEGHASREDSTYQNVGLLHSLGRLVVEQRHHWILYSVCCIGILGAGAVYPLQAYIFARIINVFTLTGPELVKQGNFWAGMFGVLAGGVGLSYYLLGAASHLISVELTRKYRSEYLSNMIRKPILFFDDKVHSPGSLTSRLSSDSQQVQQLLSMEMSMALIACTNLLGCTIIAFVYGWKLSLVGLFAALPLILGAGLVRTRLEIQLEAENAKVFENSSQFATEAVAGFRTVLSLLMEPMIRSRYDKLLKGHVVEALAKAKYGTIIFAASDSLELACMSLTFWYGGKLLASREYDLIQFFIVYTAIIQGATAAGIWFSFTPSMAQATGAANRILSMRPTSTDPSSYSPLPCSDEGVGIEFQHVSFKYQSRDVPVLSNLNLQILPGQVAALVGSSGCGKSTTLSLLERFYDASSGHILYNGQDITTFSPAEYRKQMSLVSQEPTLYQGSIRENISLSVESASDDDIKQACRDAQIHDFITSLPEGYETRLGPKGMSLSGGQRQRISLARALLRKPKILLLDEATSSLDSESEKYVQEAIERAASEGDRTVIIVAHRLATIQKADVIFVLGSGKVLEKGDHQALLRKKGVYWQMCQAQALNR.

The interval 1–21 (MSAIELPPLRSRSEEAARAEH) is disordered. The segment covering 11–21 (SRSEEAARAEH) has biased composition (basic and acidic residues). The next 6 helical transmembrane spans lie at 75–95 (YFLI…MPLM), 130–150 (LYIF…MLAI), 203–223 (HFAT…VALV), 230–250 (LIAS…FPPF), 312–332 (TMSP…WFGI), and 340–360 (ISSV…VMNI). An ABC transmembrane type-1 1 domain is found at 80–372 (LCCFTSIGAG…VASPIISIAK (293 aa)). Positions 405 to 706 (ITFINVAFSY…GDGVYYGLVH (302 aa)) constitute an ABC transporter 1 domain. Residue 440–447 (GPSGSGKS) coordinates ATP. Disordered regions lie at residues 473–518 (EIPS…TCTG) and 715–747 (EDDD…HASR). 6 helical membrane-spanning segments follow: residues 777-797 (VCCI…YIFA), 816-836 (FWAG…YLLG), 895-917 (MSMA…VYGW), 919-941 (LSLV…RTRL), 1003-1023 (IIFA…FWYG), and 1037-1057 (FFIV…WFSF). One can recognise an ABC transmembrane type-1 2 domain in the interval 777 to 1063 (VCCIGILGAG…WFSFTPSMAQ (287 aa)). The ABC transporter 2 domain maps to 1096–1333 (IEFQHVSFKY…KGVYWQMCQA (238 aa)). An ATP-binding site is contributed by 1130 to 1137 (GSSGCGKS).

Belongs to the ABC transporter superfamily. ABCB family. Multidrug resistance exporter (TC 3.A.1.201) subfamily.

It is found in the cell membrane. It functions in the pathway secondary metabolite biosynthesis. Its function is as follows. ABC transporter; part of the gene cluster that mediates the biosynthesis of KK-1, a novel cyclic depsipeptide with 10 residues which is a promising active compound with high activity against many plant pathogens, especially Botrytis cinerea. Is probably directly involved in the secretion of KK-1 and thus confers self-tolerance against KK-1. The protein is ABC-type transporter kk1G of Curvularia clavata.